A 331-amino-acid polypeptide reads, in one-letter code: MQNEHSEFAKMSQTLTNVQELRLRASTTRHALSDIVREKDWSDFQFAPIREATVSRAMTTRYFEDLYRYAVSDVVIVGAGSSGLSAAYVLAKNRPDLRIAIIEANVAPGGGAWLGGQLFSAMIMRKPTHLFLDELEIPYEDEGDYVVVKHAALFTSTVLSKVLQFPNVKLFNATAVEDLVTKPSANGGVTIAGVVTNWTLVTMAHDVQSCMDPNVIELEGYKDDGTRDPKKKHGVVLSTTGHDGPFGAFCAKRLAALDAQHAIKGMQSLDMNTAEAGVVKESGATAGVEYMYFAGMETATKKGVSRMGPTFGAMAVSGIKAAEEILRHFAE.

Residues S82, 103–104 (EA), G111, and V176 each bind substrate. The residue at position 210 (C210) is a 2,3-didehydroalanine (Cys). Substrate contacts are provided by residues D212, H242, M296, and 306-308 (RMG).

It belongs to the THI4 family. As to quaternary structure, homooctamer. It depends on Fe cation as a cofactor. During the catalytic reaction, a sulfide is transferred from Cys-210 to a reaction intermediate, generating a dehydroalanine residue.

The protein localises to the cytoplasm. It localises to the nucleus. It carries out the reaction [ADP-thiazole synthase]-L-cysteine + glycine + NAD(+) = [ADP-thiazole synthase]-dehydroalanine + ADP-5-ethyl-4-methylthiazole-2-carboxylate + nicotinamide + 3 H2O + 2 H(+). Involved in biosynthesis of the thiamine precursor thiazole. Catalyzes the conversion of NAD and glycine to adenosine diphosphate 5-(2-hydroxyethyl)-4-methylthiazole-2-carboxylic acid (ADT), an adenylated thiazole intermediate. The reaction includes an iron-dependent sulfide transfer from a conserved cysteine residue of the protein to a thiazole intermediate. The enzyme can only undergo a single turnover, which suggests it is a suicide enzyme. May have additional roles in adaptation to various stress conditions and in DNA damage tolerance. In Eremothecium gossypii (strain ATCC 10895 / CBS 109.51 / FGSC 9923 / NRRL Y-1056) (Yeast), this protein is Thiamine thiazole synthase.